A 306-amino-acid polypeptide reads, in one-letter code: Glutaminase (306 aa).

Positions 64, 115, 159, 166, 190, 242, and 260 each coordinate substrate.

This sequence belongs to the glutaminase family. Homotetramer.

It catalyses the reaction L-glutamine + H2O = L-glutamate + NH4(+). The chain is Glutaminase from Aeromonas salmonicida (strain A449).